The primary structure comprises 819 residues: DNA topoisomerase 4 subunit A (819 aa).

Positions 30–496 (LPDIRDGLKP…QIIEIDTASL (467 aa)) constitute a Topo IIA-type catalytic domain. The O-(5'-phospho-DNA)-tyrosine intermediate role is filled by Tyr-118.

Belongs to the type II topoisomerase GyrA/ParC subunit family. ParC type 2 subfamily. As to quaternary structure, heterotetramer composed of ParC and ParE.

The protein resides in the cell membrane. It carries out the reaction ATP-dependent breakage, passage and rejoining of double-stranded DNA.. Functionally, topoisomerase IV is essential for chromosome segregation. It relaxes supercoiled DNA. Performs the decatenation events required during the replication of a circular DNA molecule. This chain is DNA topoisomerase 4 subunit A, found in Streptococcus pyogenes serotype M3 (strain ATCC BAA-595 / MGAS315).